The sequence spans 988 residues: Putative disease resistance protein RGA4 (988 aa).

Residues 137-439 enclose the NB-ARC domain; that stretch reads AAAATRETGF…MAHGFLLSKG (303 aa). Residue 184 to 191 participates in ATP binding; sequence GMGGLGKT. LRR repeat units lie at residues 526-548, 549-572, 574-595, 596-620, 638-662, 674-696, 751-776, 784-808, 829-851, 852-876, 878-900, 901-925, 927-950, and 966-988; these read FVSLRVLNLSYSKLEQLPSSIGD, LLHLRYLDLSCNNFRSLPERLCKL, NLQTLDVHNCYSLNCLPKQTSK, LSSLRHLVVDGCPLTSTPPRIGLLT, LGELKNLNLCGSISITHLERVKNDT, LQSLSMSWDNDGPNRYESKEVKV, LPCLENLELQNGSAEVEYVEEDDVHS, FPSLKKLRIWFFRSLKGLMKEEGEE, LSSVKKLEVHGNTNTRGLSSISN, LSTLTSLRIGANYRATSLPEEMFTS, TNLEFLSFFDFKNLKDLPTSLTS, LNALKRLQIESCDSLESFPEQGLEG, TSLTQLFVKYCKMLKCLPEGLQHL, and KRCDKEIGEDWHKIAHIPNLDIH.

Belongs to the disease resistance NB-LRR family.

Disease resistance protein. Resistance proteins guard the plant against pathogens that contain an appropriate avirulence protein via a direct or indirect interaction with this avirulence protein. That triggers a defense system which restricts the pathogen growth. The protein is Putative disease resistance protein RGA4 (RGA4) of Solanum bulbocastanum (Wild potato).